A 647-amino-acid chain; its full sequence is Phosphomethylpyrimidine synthase (647 aa).

Substrate-binding positions include N235, M264, Y293, H329, 349-351, 390-393, and E429; these read SRG and DGLR. H433 is a binding site for Zn(2+). Y456 contributes to the substrate binding site. A Zn(2+)-binding site is contributed by H497. Positions 577, 580, and 585 each coordinate [4Fe-4S] cluster. The interval 623–647 is disordered; the sequence is KSAEFKASGSELYHPAVSHEEVAEG.

Belongs to the ThiC family. In terms of assembly, homodimer. Requires [4Fe-4S] cluster as cofactor.

The enzyme catalyses 5-amino-1-(5-phospho-beta-D-ribosyl)imidazole + S-adenosyl-L-methionine = 4-amino-2-methyl-5-(phosphooxymethyl)pyrimidine + CO + 5'-deoxyadenosine + formate + L-methionine + 3 H(+). Its pathway is cofactor biosynthesis; thiamine diphosphate biosynthesis. Catalyzes the synthesis of the hydroxymethylpyrimidine phosphate (HMP-P) moiety of thiamine from aminoimidazole ribotide (AIR) in a radical S-adenosyl-L-methionine (SAM)-dependent reaction. The polypeptide is Phosphomethylpyrimidine synthase (Vibrio vulnificus (strain CMCP6)).